Reading from the N-terminus, the 509-residue chain is Cytochrome P450 monooxygenase FUP2 (509 aa).

2 helical membrane passes run 16–36 and 224–244; these read FGLA…YGCF and MVEA…FGIA. Cysteine 450 is a binding site for heme.

Belongs to the cytochrome P450 family. Requires heme as cofactor.

It localises to the membrane. It participates in secondary metabolite biosynthesis. Its function is as follows. Cytochrome P450 monooxygenase; part of the gene cluster that mediates the biosynthesis of the mycotoxin fusaproliferin (FUP) that belongs to the class of bicyclic sesterterpenoids. FUP2 introduces a hydroxyl group at the C-24 position resulting in the formation of preterpestacin IIa, which can be further oxidized. The oxidation of the hydroxyl group at C-24 to an aldehyde and further to a carboxylic group takes place via unspecific alcohol and aldehyde dehydrogenases and leads to the shunt products preterpestacin IIc and preterpestacin IIb, respectively. The FUP biosynthetic pathway starts with the enzyme encoded by FUP1 that combines a C-terminal prenyltransferase domain responsible for the synthesis of geranylgeranyl diphosphate with the N-terminal terpene cyclase domain, to yield preterpestacin I. Preterpestacin I is then decorated by oxygenation steps that are catalyzed by two cytochrome P450 monooxygenases. First, FUP2 introduces a hydroxyl group at the C-24 position resulting in the formation of preterpestacin IIa. The second P450 monooxygenase catalyzes the hydroxylation at C-16 and C-17 of preterpestacin IIa, producing preterpestacin III. Subsequently, the FAD-dependent oxidoreductase FUP4 catalyzes the oxidation of the hydroxy group at the C-16 position to a keto group, leading to the formation of (-)-terpestacin, which is the immediate precursor of FUP. The final step in the proposed biosynthetic pathway is the addition of an acetyl group at the C-24 position of terpestacin, which is catalyzed by the acetyltransferase FUP5. In Fusarium proliferatum (strain ET1) (Orchid endophyte fungus), this protein is Cytochrome P450 monooxygenase FUP2.